We begin with the raw amino-acid sequence, 548 residues long: Chaperonin GroEL (548 aa).

Residues 29-32 (TLGP), K50, 86-90 (DGTTT), G416, and D497 each bind ATP.

This sequence belongs to the chaperonin (HSP60) family. In terms of assembly, forms a cylinder of 14 subunits composed of two heptameric rings stacked back-to-back. Interacts with the co-chaperonin GroES.

It localises to the cytoplasm. The enzyme catalyses ATP + H2O + a folded polypeptide = ADP + phosphate + an unfolded polypeptide.. Together with its co-chaperonin GroES, plays an essential role in assisting protein folding. The GroEL-GroES system forms a nano-cage that allows encapsulation of the non-native substrate proteins and provides a physical environment optimized to promote and accelerate protein folding. This is Chaperonin GroEL from Neorickettsia risticii (Ehrlichia risticii).